The primary structure comprises 226 residues: Transmembrane protein 204 (226 aa).

Over methionine 1 to lysine 5 the chain is Cytoplasmic. Residues leucine 6–phenylalanine 26 form a helical membrane-spanning segment. The Extracellular segment spans residues threonine 27 to asparagine 103. The helical transmembrane segment at leucine 104–leucine 124 threads the bilayer. Residues proline 125–glutamate 136 are Cytoplasmic-facing. A helical transmembrane segment spans residues alanine 137–tyrosine 157. Topologically, residues arginine 158 to tyrosine 170 are extracellular. Asparagine 164 carries N-linked (GlcNAc...) asparagine glycosylation. A helical transmembrane segment spans residues leucine 171–leucine 191. The Cytoplasmic portion of the chain corresponds to histidine 192–cysteine 226.

The protein resides in the cell junction. The protein localises to the adherens junction. Its subcellular location is the cell membrane. Functionally, can influence paracellular permeability. Appears to be involved in cell-cell interactions through adherens. The protein is Transmembrane protein 204 (Tmem204) of Rattus norvegicus (Rat).